The primary structure comprises 90 residues: Sec-independent protein translocase protein TatA (90 aa).

The helical transmembrane segment at 1–21 threads the bilayer; sequence MGISPWTLLIVLLIVLLVFGT. Basic and acidic residues-rich tracts occupy residues 42-59 and 70-90; these read MKEG…EPSK and SGEG…RHSS. A disordered region spans residues 42–90; the sequence is MKEGEEGAKEGEKSEPSKLEQPPEEEKESGEGHTIEGERSEQPRDRHSS.

This sequence belongs to the TatA/E family. As to quaternary structure, the Tat system comprises two distinct complexes: a TatABC complex, containing multiple copies of TatA, TatB and TatC subunits, and a separate TatA complex, containing only TatA subunits. Substrates initially bind to the TatABC complex, which probably triggers association of the separate TatA complex to form the active translocon.

The protein resides in the cell inner membrane. Functionally, part of the twin-arginine translocation (Tat) system that transports large folded proteins containing a characteristic twin-arginine motif in their signal peptide across membranes. TatA could form the protein-conducting channel of the Tat system. The chain is Sec-independent protein translocase protein TatA from Alkalilimnicola ehrlichii (strain ATCC BAA-1101 / DSM 17681 / MLHE-1).